A 907-amino-acid polypeptide reads, in one-letter code: Protein translocase subunit SecA (907 aa).

ATP is bound by residues Gln87, 105 to 109 (GEGKT), and Asp513. Residues 841 to 853 (EAQRRAQAEEAAR) are compositionally biased toward basic and acidic residues. A disordered region spans residues 841–907 (EAQRRAQAEE…KYKQCHGQIN (67 aa)). The segment covering 854-865 (RAQAQHASAQSQ) has biased composition (low complexity). A compositionally biased stretch (basic and acidic residues) spans 872 to 887 (EGHHQPVVRDERKVGR). Cys891, Cys893, Cys902, and His903 together coordinate Zn(2+).

It belongs to the SecA family. Monomer and homodimer. Part of the essential Sec protein translocation apparatus which comprises SecA, SecYEG and auxiliary proteins SecDF-YajC and YidC. Zn(2+) serves as cofactor.

The protein resides in the cell inner membrane. It is found in the cytoplasm. It carries out the reaction ATP + H2O + cellular proteinSide 1 = ADP + phosphate + cellular proteinSide 2.. In terms of biological role, part of the Sec protein translocase complex. Interacts with the SecYEG preprotein conducting channel. Has a central role in coupling the hydrolysis of ATP to the transfer of proteins into and across the cell membrane, serving both as a receptor for the preprotein-SecB complex and as an ATP-driven molecular motor driving the stepwise translocation of polypeptide chains across the membrane. This is Protein translocase subunit SecA from Vibrio vulnificus (strain CMCP6).